The chain runs to 116 residues: Large ribosomal subunit protein bL19 (116 aa).

This sequence belongs to the bacterial ribosomal protein bL19 family.

In terms of biological role, this protein is located at the 30S-50S ribosomal subunit interface and may play a role in the structure and function of the aminoacyl-tRNA binding site. The sequence is that of Large ribosomal subunit protein bL19 from Staphylococcus saprophyticus subsp. saprophyticus (strain ATCC 15305 / DSM 20229 / NCIMB 8711 / NCTC 7292 / S-41).